We begin with the raw amino-acid sequence, 232 residues long: Venom allergen 5 (232 aa).

Positions 1–23 (MEQIKYLLIGIIFSSAISSSLQC) are cleaved as a signal peptide. Intrachain disulfides connect Cys28/Cys43, Cys54/Cys119, and Cys198/Cys215. The region spanning 71–217 (LQLHNELRAK…FYTTMVACNY (147 aa)) is the SCP domain.

This sequence belongs to the CRISP family. Venom allergen 5-like subfamily. In terms of tissue distribution, expressed by the venom gland.

The protein localises to the secreted. The polypeptide is Venom allergen 5 (Microctonus hyperodae (Parasitoid wasp)).